Reading from the N-terminus, the 77-residue chain is Large ribosomal subunit protein uL29 (77 aa).

This sequence belongs to the universal ribosomal protein uL29 family.

This is Large ribosomal subunit protein uL29 from Cutibacterium acnes (strain DSM 16379 / KPA171202) (Propionibacterium acnes).